The chain runs to 209 residues: Uracil phosphoribosyltransferase (209 aa).

5-phospho-alpha-D-ribose 1-diphosphate contacts are provided by residues Arg79, Arg104, and 131 to 139 (DPMLATGNS). Uracil is bound by residues Ile194 and 199 to 201 (GDA). Asp200 provides a ligand contact to 5-phospho-alpha-D-ribose 1-diphosphate.

Belongs to the UPRTase family. The cofactor is Mg(2+).

The enzyme catalyses UMP + diphosphate = 5-phospho-alpha-D-ribose 1-diphosphate + uracil. The protein operates within pyrimidine metabolism; UMP biosynthesis via salvage pathway; UMP from uracil: step 1/1. With respect to regulation, allosterically activated by GTP. Functionally, catalyzes the conversion of uracil and 5-phospho-alpha-D-ribose 1-diphosphate (PRPP) to UMP and diphosphate. This Sinorhizobium medicae (strain WSM419) (Ensifer medicae) protein is Uracil phosphoribosyltransferase.